A 203-amino-acid polypeptide reads, in one-letter code: ATP-dependent Clp protease proteolytic subunit 1 (203 aa).

Ser-103 acts as the Nucleophile in catalysis. His-128 is a catalytic residue.

The protein belongs to the peptidase S14 family. As to quaternary structure, fourteen ClpP subunits assemble into 2 heptameric rings which stack back to back to give a disk-like structure with a central cavity, resembling the structure of eukaryotic proteasomes.

Its subcellular location is the cytoplasm. It carries out the reaction Hydrolysis of proteins to small peptides in the presence of ATP and magnesium. alpha-casein is the usual test substrate. In the absence of ATP, only oligopeptides shorter than five residues are hydrolyzed (such as succinyl-Leu-Tyr-|-NHMec, and Leu-Tyr-Leu-|-Tyr-Trp, in which cleavage of the -Tyr-|-Leu- and -Tyr-|-Trp bonds also occurs).. In terms of biological role, cleaves peptides in various proteins in a process that requires ATP hydrolysis. Has a chymotrypsin-like activity. Plays a major role in the degradation of misfolded proteins. This chain is ATP-dependent Clp protease proteolytic subunit 1, found in Treponema pallidum (strain Nichols).